A 485-amino-acid chain; its full sequence is Glutamyl-tRNA(Gln) amidotransferase subunit A (485 aa).

Residues Lys-79 and Ser-154 each act as charge relay system in the active site. Ser-178 acts as the Acyl-ester intermediate in catalysis.

It belongs to the amidase family. GatA subfamily. Heterotrimer of A, B and C subunits.

It carries out the reaction L-glutamyl-tRNA(Gln) + L-glutamine + ATP + H2O = L-glutaminyl-tRNA(Gln) + L-glutamate + ADP + phosphate + H(+). In terms of biological role, allows the formation of correctly charged Gln-tRNA(Gln) through the transamidation of misacylated Glu-tRNA(Gln) in organisms which lack glutaminyl-tRNA synthetase. The reaction takes place in the presence of glutamine and ATP through an activated gamma-phospho-Glu-tRNA(Gln). This is Glutamyl-tRNA(Gln) amidotransferase subunit A from Staphylococcus aureus.